The following is a 266-amino-acid chain: Glucosamine-6-phosphate deaminase (266 aa).

Asp72 serves as the catalytic Proton acceptor; for enolization step. Asp141 acts as the For ring-opening step in catalysis. Catalysis depends on His143, which acts as the Proton acceptor; for ring-opening step. Glu148 serves as the catalytic For ring-opening step.

Belongs to the glucosamine/galactosamine-6-phosphate isomerase family. NagB subfamily. Homohexamer.

The catalysed reaction is alpha-D-glucosamine 6-phosphate + H2O = beta-D-fructose 6-phosphate + NH4(+). The protein operates within amino-sugar metabolism; N-acetylneuraminate degradation; D-fructose 6-phosphate from N-acetylneuraminate: step 5/5. Allosterically activated by N-acetylglucosamine 6-phosphate (GlcNAc6P). Functionally, catalyzes the reversible isomerization-deamination of glucosamine 6-phosphate (GlcN6P) to form fructose 6-phosphate (Fru6P) and ammonium ion. The protein is Glucosamine-6-phosphate deaminase of Erwinia tasmaniensis (strain DSM 17950 / CFBP 7177 / CIP 109463 / NCPPB 4357 / Et1/99).